The following is a 310-amino-acid chain: Integrin-binding sialoprotein (310 aa).

The N-terminal stretch at 1–16 (MKTVLILLSILGMACA) is a signal peptide. Serine 31, serine 62, serine 67, serine 75, serine 76, serine 98, and serine 106 each carry phosphoserine. A disordered region spans residues 61–284 (QSSSDSSEEN…NGDPRGDNYR (224 aa)). Residues 62–74 (SSSDSSEENGNGD) are compositionally biased toward low complexity. 2 stretches are compositionally biased toward acidic residues: residues 75–87 (SSEE…ETSN) and 96–108 (EDSD…ESEA). An N-linked (GlcNAc...) asparagine glycan is attached at asparagine 110. Threonine 144 is modified (phosphothreonine). Acidic residues predominate over residues 152–174 (DESDEEEEEEEEEENEAEVDDNE). Serine 154 is subject to Phosphoserine. Over residues 175 to 187 (QGINGTSSNSTEV) the composition is skewed to polar residues. Asparagine 178 and asparagine 183 each carry an N-linked (GlcNAc...) asparagine glycan. Positions 198-208 (NGEEDGEEESV) are enriched in acidic residues. Polar residues predominate over residues 209–227 (TEANTEGITVAGETTTSPN). At serine 273 the chain carries Phosphoserine. Positions 279–281 (RGD) match the Integrin-binding motif motif. At serine 300 the chain carries Phosphoserine. Tyrosine 306 and tyrosine 307 each carry sulfotyrosine.

As to quaternary structure, monomer. Interacts with integrins; the interaction promotes cell adhesion.

The protein localises to the secreted. Its function is as follows. Binds tightly to hydroxyapatite. Appears to form an integral part of the mineralized matrix. Probably important to cell-matrix interaction. Promotes adhesion and migration of various cells via the alpha-V/beta-3 integrin receptor (ITGAV:ITGB3). The chain is Integrin-binding sialoprotein (IBSP) from Bos taurus (Bovine).